We begin with the raw amino-acid sequence, 121 residues long: MEPDGVHAEQQFILNQISCANTALQRQREELASLVMLHACKRGLFCPVKTYKLSLNASASEHSLHFEKSPSRFTLVNTHAGASVRVALHHQGASGSIRCSCSHAECLPVLLKTLCAFNFLD.

This sequence belongs to the adenoviridae E3_15 family.

Protects virus-infected cells from TNF-induced cytolysis. The protein is Early E3 14.5 kDa protein (E3) of Bovine adenovirus B serotype 3 (BAdV-3).